The primary structure comprises 103 residues: Small ribosomal subunit protein uS10 (103 aa).

Belongs to the universal ribosomal protein uS10 family. In terms of assembly, part of the 30S ribosomal subunit.

In terms of biological role, involved in the binding of tRNA to the ribosomes. In Laribacter hongkongensis (strain HLHK9), this protein is Small ribosomal subunit protein uS10.